We begin with the raw amino-acid sequence, 266 residues long: DNA damage-regulated autophagy modulator protein 2 (266 aa).

Transmembrane regions (helical) follow at residues 8–28 (LSFLPSALVIWTAAAFIFSYI), 53–73 (KCLFGAMLNIAAVLCVATIYV), 92–112 (NKAGLVLGLLSCLGLSLVANF), 117–137 (FFAVHVCGAVLTFGMGSLYMF), 160–180 (LLLVIWCGVSAFSMLTCSSLL), and 207–227 (ITTAAEWSMSLSFFGFFLTYI).

Belongs to the DRAM/TMEM150 family.

The protein localises to the lysosome membrane. It localises to the photoreceptor inner segment. The protein resides in the apical cell membrane. Plays a role in the initiation of autophagy. In the retina, might be involved in the process of photoreceptor cells renewal and recycling to preserve visual function. Induces apoptotic cell death when coexpressed with DRAM1. The sequence is that of DNA damage-regulated autophagy modulator protein 2 (DRAM2) from Bos taurus (Bovine).